The sequence spans 336 residues: Holliday junction branch migration complex subunit RuvB (336 aa).

The segment at 4–184 (ADRLISAGTT…FGIVQRLEFY (181 aa)) is large ATPase domain (RuvB-L). Residues Ile23, Arg24, Gly65, Lys68, Thr69, Thr70, 131–133 (EDY), Arg174, Tyr184, and Arg221 each bind ATP. Thr69 serves as a coordination point for Mg(2+). The interval 185–255 (QVPDLQYIVS…IAAQALDMLN (71 aa)) is small ATPAse domain (RuvB-S). Residues 258–336 (AEGFDYMDRK…HFGITPPEMP (79 aa)) form a head domain (RuvB-H) region. The DNA site is built by Arg294, Arg313, and Arg318.

This sequence belongs to the RuvB family. Homohexamer. Forms an RuvA(8)-RuvB(12)-Holliday junction (HJ) complex. HJ DNA is sandwiched between 2 RuvA tetramers; dsDNA enters through RuvA and exits via RuvB. An RuvB hexamer assembles on each DNA strand where it exits the tetramer. Each RuvB hexamer is contacted by two RuvA subunits (via domain III) on 2 adjacent RuvB subunits; this complex drives branch migration. In the full resolvosome a probable DNA-RuvA(4)-RuvB(12)-RuvC(2) complex forms which resolves the HJ.

The protein resides in the cytoplasm. It catalyses the reaction ATP + H2O = ADP + phosphate + H(+). Functionally, the RuvA-RuvB-RuvC complex processes Holliday junction (HJ) DNA during genetic recombination and DNA repair, while the RuvA-RuvB complex plays an important role in the rescue of blocked DNA replication forks via replication fork reversal (RFR). RuvA specifically binds to HJ cruciform DNA, conferring on it an open structure. The RuvB hexamer acts as an ATP-dependent pump, pulling dsDNA into and through the RuvAB complex. RuvB forms 2 homohexamers on either side of HJ DNA bound by 1 or 2 RuvA tetramers; 4 subunits per hexamer contact DNA at a time. Coordinated motions by a converter formed by DNA-disengaged RuvB subunits stimulates ATP hydrolysis and nucleotide exchange. Immobilization of the converter enables RuvB to convert the ATP-contained energy into a lever motion, pulling 2 nucleotides of DNA out of the RuvA tetramer per ATP hydrolyzed, thus driving DNA branch migration. The RuvB motors rotate together with the DNA substrate, which together with the progressing nucleotide cycle form the mechanistic basis for DNA recombination by continuous HJ branch migration. Branch migration allows RuvC to scan DNA until it finds its consensus sequence, where it cleaves and resolves cruciform DNA. In Escherichia coli (strain ATCC 8739 / DSM 1576 / NBRC 3972 / NCIMB 8545 / WDCM 00012 / Crooks), this protein is Holliday junction branch migration complex subunit RuvB.